The chain runs to 413 residues: Protein CDKN2AIP homolog B (413 aa).

Residues 21–118 (LERVRGQCES…TTRDELVAKV (98 aa)) form the XRN2-binding (XTBD) domain. Residues 118–266 (VKKRGNSSSN…PTRRFTTEHT (149 aa)) form a disordered region. Positions 183 to 193 (NKREAHSRTDV) are enriched in basic and acidic residues.

The protein belongs to the CARF family.

It is found in the nucleus. The protein localises to the nucleoplasm. Functionally, may regulate DNA damage response and cell proliferation. The chain is Protein CDKN2AIP homolog B (cdkn2aip-b) from Xenopus laevis (African clawed frog).